The primary structure comprises 105 residues: MVVMSAPTEPKSRPGTTGQRESAPEDVTASPWVTIVWDDPVNLMTYVTYVFQKLFGYSEPHATKLMLQVHNEGKAVVSAGSREAMEVDVSKLHAAGLWATMQQDR.

The segment at 1–27 (MVVMSAPTEPKSRPGTTGQRESAPEDV) is disordered.

It belongs to the ClpS family. In terms of assembly, binds to the N-terminal domain of the chaperone ClpA.

Involved in the modulation of the specificity of the ClpAP-mediated ATP-dependent protein degradation. The sequence is that of ATP-dependent Clp protease adapter protein ClpS from Mycolicibacterium paratuberculosis (strain ATCC BAA-968 / K-10) (Mycobacterium paratuberculosis).